The primary structure comprises 68 residues: Protein SlyX homolog (68 aa).

The protein belongs to the SlyX family.

The sequence is that of Protein SlyX homolog from Pseudomonas putida (strain GB-1).